The following is a 103-amino-acid chain: Histone H4 (103 aa).

Lysine 6 carries the N6-acetyl-N6-methyllysine; alternate modification. An N6-methyllysine; alternate mark is found at lysine 6, lysine 9, and lysine 13. Lysine 13 is modified (N6-acetyl-N6-methyllysine; alternate). A DNA-binding region spans residues 17 to 21; it reads KRHRK. Lysine 92 is subject to N6-glutaryllysine.

The protein belongs to the histone H4 family. The nucleosome is a histone octamer containing two molecules each of H2A, H2B, H3 and H4 assembled in one H3-H4 heterotetramer and two H2A-H2B heterodimers. The octamer wraps approximately 147 bp of DNA. Glutarylation at Lys-92 (H4K91glu) destabilizes nucleosomes by promoting dissociation of the H2A-H2B dimers from nucleosomes.

The protein resides in the nucleus. It localises to the chromosome. Core component of nucleosome. Nucleosomes wrap and compact DNA into chromatin, limiting DNA accessibility to the cellular machineries which require DNA as a template. Histones thereby play a central role in transcription regulation, DNA repair, DNA replication and chromosomal stability. DNA accessibility is regulated via a complex set of post-translational modifications of histones, also called histone code, and nucleosome remodeling. This Blastobotrys adeninivorans (Yeast) protein is Histone H4 (ahsb4).